Reading from the N-terminus, the 367-residue chain is MTEETVQPLIEFKNVSLDYGETKVLKKVDLEIEEGKFYTLLGPSGSGKSTILSLISGRLQPTGGDILIEGKNVNSLPSNQRKVNTVFQNYALFPNMNVYDNVAFGPSIKGFSKKKIDQLVKSMLKLVKLDDFSDREISEISGGQQQRVAIARALANQPKVLLLDEPLSALDYKLRKEMQSELRELQQRLGITFIFVTHDQEEALAMSDWIFVINDGKVEQSGSPVDIYDEPINHFVANFIGEANIVPGVMKEDYLVSFAGKDFKNVDAGMRTNERVEVVIRPEDLDIVVPSRGKLQVTIEDQSFRGDSYEITAIDDAGNEWAVQATNPAKIGQRRGLKFDPEDIHIMRLNESEEDFDARLESYEGED.

Residues 10–240 (IEFKNVSLDY…PINHFVANFI (231 aa)) enclose the ABC transporter domain. 42–49 (GPSGSGKS) is a binding site for ATP.

It belongs to the ABC transporter superfamily. Spermidine/putrescine importer (TC 3.A.1.11.1) family. As to quaternary structure, the complex is composed of two ATP-binding proteins (PotA), two transmembrane proteins (PotB and PotC) and a solute-binding protein (PotD).

Its subcellular location is the cell membrane. The enzyme catalyses ATP + H2O + polyamine-[polyamine-binding protein]Side 1 = ADP + phosphate + polyamineSide 2 + [polyamine-binding protein]Side 1.. Its function is as follows. Part of the ABC transporter complex PotABCD involved in spermidine/putrescine import. Responsible for energy coupling to the transport system. The chain is Spermidine/putrescine import ATP-binding protein PotA from Oenococcus oeni (strain ATCC BAA-331 / PSU-1).